The primary structure comprises 409 residues: Argininosuccinate synthase (409 aa).

ATP-binding positions include 12–20 (AYSGGLDTS) and Ala39. Tyr91 contacts L-citrulline. Residue Gly121 coordinates ATP. L-aspartate is bound by residues Thr123, Asn127, and Asp128. Position 127 (Asn127) interacts with L-citrulline. Arg131, Ser180, Ser189, Glu265, and Tyr277 together coordinate L-citrulline.

This sequence belongs to the argininosuccinate synthase family. Type 1 subfamily. Homotetramer.

It is found in the cytoplasm. It carries out the reaction L-citrulline + L-aspartate + ATP = 2-(N(omega)-L-arginino)succinate + AMP + diphosphate + H(+). Its pathway is amino-acid biosynthesis; L-arginine biosynthesis; L-arginine from L-ornithine and carbamoyl phosphate: step 2/3. This is Argininosuccinate synthase from Buchnera aphidicola subsp. Baizongia pistaciae (strain Bp).